Consider the following 367-residue polypeptide: Chorismate synthase (367 aa).

Arginine 48 is an NADP(+) binding site. FMN is bound by residues 125–127 (RSS), 238–239 (NA), glycine 278, 293–297 (KPTSS), and arginine 319.

It belongs to the chorismate synthase family. As to quaternary structure, homotetramer. FMNH2 serves as cofactor.

The catalysed reaction is 5-O-(1-carboxyvinyl)-3-phosphoshikimate = chorismate + phosphate. It functions in the pathway metabolic intermediate biosynthesis; chorismate biosynthesis; chorismate from D-erythrose 4-phosphate and phosphoenolpyruvate: step 7/7. Catalyzes the anti-1,4-elimination of the C-3 phosphate and the C-6 proR hydrogen from 5-enolpyruvylshikimate-3-phosphate (EPSP) to yield chorismate, which is the branch point compound that serves as the starting substrate for the three terminal pathways of aromatic amino acid biosynthesis. This reaction introduces a second double bond into the aromatic ring system. This Halorhodospira halophila (strain DSM 244 / SL1) (Ectothiorhodospira halophila (strain DSM 244 / SL1)) protein is Chorismate synthase.